A 620-amino-acid chain; its full sequence is Membralin (620 aa).

Positions 1-33 are disordered; it reads MSEHVEPAAPGPGPNGGGGGPAPARGPRTPNLN. Position 2 is an N-acetylserine (Ser-2). Residues 22-31 show a composition bias toward low complexity; sequence APARGPRTPN. Phosphothreonine is present on Thr-29. The helical transmembrane segment at 70-90 threads the bilayer; the sequence is FFVLLKALFVLFVLAYIHIVF. Residue Asn-189 is glycosylated (N-linked (GlcNAc...) asparagine). 3 helical membrane passes run 302–322, 346–366, and 426–446; these read TSYL…SMLL, IAFP…MEAI, and YSSL…IYFF. Disordered stretches follow at residues 474–517 and 568–620; these read TPTA…GPVA and SPLG…EVGS. 2 stretches are compositionally biased toward low complexity: residues 499-517 and 568-593; these read PPAL…GPVA and SPLG…AASD.

This sequence belongs to the membralin family. In terms of assembly, interacts with ERLIN2.

It localises to the endoplasmic reticulum membrane. Functionally, may have a role in the ERAD pathway required for clearance of misfolded proteins in the endoplasmic reticulum (ER). Promotes survival of motor neurons, probably by protecting against ER stress. This is Membralin (TMEM259) from Homo sapiens (Human).